A 347-amino-acid chain; its full sequence is D-alanine--D-alanine ligase (347 aa).

The ATP-grasp domain occupies 134–332; the sequence is KLYAKDLGVK…LAQSLPKTPK (199 aa). 161-216 serves as a coordination point for ATP; it reads LIGFNFPFIIKPSNAGSSLGVSVVKEEKELIYALDGAFEYSKEILIEPFIQGVKEY. Mg(2+) contacts are provided by Asp288, Glu300, and Asn302.

This sequence belongs to the D-alanine--D-alanine ligase family. It depends on Mg(2+) as a cofactor. Mn(2+) serves as cofactor.

The protein localises to the cytoplasm. It catalyses the reaction 2 D-alanine + ATP = D-alanyl-D-alanine + ADP + phosphate + H(+). It functions in the pathway cell wall biogenesis; peptidoglycan biosynthesis. In terms of biological role, cell wall formation. The sequence is that of D-alanine--D-alanine ligase from Helicobacter pylori (strain Shi470).